Reading from the N-terminus, the 204-residue chain is MRVINLGRQDYLNIWDKMKTFTNTRDKNTKDELWIVEHNPVFTQGVSSKPEHILSNTDIPIVQTDRGGQVTYHGPGQVIIYCLFDLKRLGMGVKRIIEIIENSIIDLLRTYTIKAHLKSGAPGVYIDNAKIAALGLRIKQSRIYHGLSLNIDMDLSPFIQINPCGYQNLKVTQLCDLTDSRDTLNIIAKKLSQILINYVSRNRH.

In terms of domain architecture, BPL/LPL catalytic spans 27–204; sequence KNTKDELWIV…LINYVSRNRH (178 aa). Substrate contacts are provided by residues 66-73, 133-135, and 146-148; these read RGGQVTYH, ALG, and GLS. Cys164 functions as the Acyl-thioester intermediate in the catalytic mechanism.

This sequence belongs to the LipB family.

It is found in the cytoplasm. It carries out the reaction octanoyl-[ACP] + L-lysyl-[protein] = N(6)-octanoyl-L-lysyl-[protein] + holo-[ACP] + H(+). The protein operates within protein modification; protein lipoylation via endogenous pathway; protein N(6)-(lipoyl)lysine from octanoyl-[acyl-carrier-protein]: step 1/2. Catalyzes the transfer of endogenously produced octanoic acid from octanoyl-acyl-carrier-protein onto the lipoyl domains of lipoate-dependent enzymes. Lipoyl-ACP can also act as a substrate although octanoyl-ACP is likely to be the physiological substrate. In Vesicomyosocius okutanii subsp. Calyptogena okutanii (strain HA), this protein is Octanoyltransferase.